Consider the following 280-residue polypeptide: Urease accessory protein UreD 1 (280 aa).

It belongs to the UreD family. UreD, UreF and UreG form a complex that acts as a GTP-hydrolysis-dependent molecular chaperone, activating the urease apoprotein by helping to assemble the nickel containing metallocenter of UreC. The UreE protein probably delivers the nickel.

Its subcellular location is the cytoplasm. Functionally, required for maturation of urease via the functional incorporation of the urease nickel metallocenter. This is Urease accessory protein UreD 1 from Brucella abortus biovar 1 (strain 9-941).